The sequence spans 202 residues: Small ribosomal subunit protein uS4 (202 aa).

Positions 1–13 (MSRYRGPRLRVTR) are enriched in basic residues. The disordered stretch occupies residues 1 to 42 (MSRYRGPRLRVTRRLGELPGLTRKASKKSNPPGQHGQARRKR). The S4 RNA-binding domain occupies 90–152 (NRLDNVCFRL…KASKKLVEGN (63 aa)).

It belongs to the universal ribosomal protein uS4 family. In terms of assembly, part of the 30S ribosomal subunit. Contacts protein S5. The interaction surface between S4 and S5 is involved in control of translational fidelity.

Its function is as follows. One of the primary rRNA binding proteins, it binds directly to 16S rRNA where it nucleates assembly of the body of the 30S subunit. In terms of biological role, with S5 and S12 plays an important role in translational accuracy. This Prochlorococcus marinus (strain MIT 9515) protein is Small ribosomal subunit protein uS4.